The sequence spans 70 residues: Dermaseptin-H3 (70 aa).

Residues 1 to 22 (MAFLKKSLFLVLFLGMVSLSIC) form the signal peptide. Residues 23–43 (EEEKRENEDEELQEDDEQSEM) constitute a propeptide that is removed on maturation. The tract at residues 25–44 (EKRENEDEELQEDDEQSEMK) is disordered. The span at 30-40 (EDEELQEDDEQ) shows a compositional bias: acidic residues. Leu70 bears the Leucine amide mark.

Expressed by the skin glands.

The protein resides in the secreted. Its function is as follows. Has antibacterial activity against the Gram-negative bacteria E.coli and P.aeruginosa, and the Gram-positive bacteria S.aureus and M.luteus. Has antiprotozoal activity against L.amazonensis. No hemolytic activity. This Pithecopus hypochondrialis (Orange-legged leaf frog) protein is Dermaseptin-H3.